Here is a 191-residue protein sequence, read N- to C-terminus: Large ribosomal subunit protein uL3 (191 aa).

The interval 115–137 (GGPASHGSRFHRRHGSIGNREWP) is disordered.

Belongs to the universal ribosomal protein uL3 family. As to quaternary structure, part of the 50S ribosomal subunit. Forms a cluster with proteins L14 and L19.

In terms of biological role, one of the primary rRNA binding proteins, it binds directly near the 3'-end of the 23S rRNA, where it nucleates assembly of the 50S subunit. The polypeptide is Large ribosomal subunit protein uL3 (rplC) (Campylobacter jejuni subsp. jejuni serotype O:2 (strain ATCC 700819 / NCTC 11168)).